The following is a 212-amino-acid chain: Regulatory protein RecX (212 aa).

The protein belongs to the RecX family.

It is found in the cytoplasm. In terms of biological role, modulates RecA activity. The protein is Regulatory protein RecX of Clostridium botulinum (strain Eklund 17B / Type B).